Consider the following 78-residue polypeptide: Molt-inhibiting hormone (78 aa).

Cystine bridges form between cysteine 7–cysteine 44, cysteine 24–cysteine 40, and cysteine 27–cysteine 53.

It is found in the secreted. Inhibits Y-organs where molting hormone (ecdysteroid) is secreted. A molting cycle is initiated when MIH secretion diminishes or stops. Also has significant hyperglycemic hormone (CHH) activity. This chain is Molt-inhibiting hormone, found in Cancer pagurus (Rock crab).